Reading from the N-terminus, the 294-residue chain is Probable 2-(5''-triphosphoribosyl)-3'-dephosphocoenzyme-A synthase (294 aa).

It belongs to the CitG/MdcB family.

The catalysed reaction is 3'-dephospho-CoA + ATP = 2'-(5''-triphospho-alpha-D-ribosyl)-3'-dephospho-CoA + adenine. The protein is Probable 2-(5''-triphosphoribosyl)-3'-dephosphocoenzyme-A synthase of Streptococcus equi subsp. zooepidemicus (strain H70).